Consider the following 377-residue polypeptide: MAEFVRAEILGTKFEYTTRYVNPQPIGMGSFGLVCSAFDQITQQPVALKKIMKPFDSSSLAKRTYREIRLLKYLRHENLICLRDIFISPLEDIYIATELLGTDLGRLLSIKPLDSKFSQYFIYQILRGLKYIHSANVIHRDLKPTNILINENCDLKICDFGLARLQEPQMTGYVATRYYRAPEIMLTWQRYGVQVDVWSAGCILAEMLRGKPLFPGKDHVHQFHLITNVLGNPPDAVIEKITSKNTVNFVKSLPSREPRDLSTVIMTHTSIAIDLLKKMLVIDPDTRISAQDALRHPYLAPYHDPTDEPAASGPFDWSFDSADFPKETWKIMIYSEVLDYLNVGNPADPAPFDPSTPFDPSALEREFSEFLSDSGQI.

Residues 20–299 (YVNPQPIGMG…AQDALRHPYL (280 aa)) form the Protein kinase domain. ATP contacts are provided by residues 26-34 (IGMGSFGLV) and Lys-49. Residue Asp-141 is the Proton acceptor of the active site. Residue Thr-171 is modified to Phosphothreonine. Residues 171–173 (TGY) carry the TXY motif. The residue at position 173 (Tyr-173) is a Phosphotyrosine.

The protein belongs to the protein kinase superfamily. Ser/Thr protein kinase family. MAP kinase subfamily. HOG1 sub-subfamily. Mg(2+) serves as cofactor. Dually phosphorylated on Thr-171 and Tyr-173, which activates the enzyme.

It carries out the reaction L-seryl-[protein] + ATP = O-phospho-L-seryl-[protein] + ADP + H(+). The catalysed reaction is L-threonyl-[protein] + ATP = O-phospho-L-threonyl-[protein] + ADP + H(+). Activated by tyrosine and threonine phosphorylation. In terms of biological role, mitogen-activated protein kinase required for growth on media where sorbitol or mannitol is the sole carbon source. The protein is Mitogen-activated protein kinase mpkC (mpkc) of Neosartorya fischeri (strain ATCC 1020 / DSM 3700 / CBS 544.65 / FGSC A1164 / JCM 1740 / NRRL 181 / WB 181) (Aspergillus fischerianus).